Consider the following 361-residue polypeptide: Molybdopterin synthase catalytic subunit (361 aa).

Substrate is bound by residues His101–Arg102, Lys117, and Lys124–Glu126.

It belongs to the MoaE family. MOCS2B subfamily. As to quaternary structure, heterotetramer; composed of 2 small (Mocs2A) and 2 large (Mocs2B) subunits.

Its subcellular location is the cytoplasm. The catalysed reaction is 2 [molybdopterin-synthase sulfur-carrier protein]-C-terminal-Gly-aminoethanethioate + cyclic pyranopterin phosphate + H2O = molybdopterin + 2 [molybdopterin-synthase sulfur-carrier protein]-C-terminal Gly-Gly + 2 H(+). It functions in the pathway cofactor biosynthesis; molybdopterin biosynthesis. In terms of biological role, catalytic subunit of the molybdopterin synthase complex, a complex that catalyzes the conversion of precursor Z into molybdopterin. Acts by mediating the incorporation of 2 sulfur atoms from thiocarboxylated Mocs2A into precursor Z to generate a dithiolene group. This chain is Molybdopterin synthase catalytic subunit, found in Drosophila persimilis (Fruit fly).